The chain runs to 97 residues: YcgL domain-containing protein PP_4590 (97 aa).

The YcgL domain maps to 3–87 (RICSIYKSPR…LEDEYIEHLP (85 aa)).

This is YcgL domain-containing protein PP_4590 from Pseudomonas putida (strain ATCC 47054 / DSM 6125 / CFBP 8728 / NCIMB 11950 / KT2440).